The primary structure comprises 561 residues: Putative transport protein DNO_0009 (561 aa).

5 consecutive transmembrane segments (helical) span residues 4 to 24 (VAIT…LGNI), 29 to 49 (VGLS…IMNL), 74 to 94 (FGLI…FFAS), 104 to 124 (AFAA…YYLF), and 166 to 186 (MGYA…MWLI). RCK C-terminal domains lie at 198-283 (LQFF…ILGE) and 285-369 (AGHE…LIGN). Transmembrane regions (helical) follow at residues 379-399 (MLPV…PIYL), 411-433 (AGGP…LYWF), 447-467 (IVLF…STLL), 472-492 (FSWI…AGII), 501-521 (YLTI…LAFA), and 538-558 (VYPL…VLLW).

Belongs to the AAE transporter (TC 2.A.81) family. YidE subfamily.

Its subcellular location is the cell membrane. In Dichelobacter nodosus (strain VCS1703A), this protein is Putative transport protein DNO_0009.